The following is an 83-amino-acid chain: U25-theraphotoxin-Cg1b (83 aa).

The first 23 residues, 1-23, serve as a signal peptide directing secretion; the sequence is MRFHTLLFLSFLLLVSCALICTA. The propeptide occupies 24 to 48; that stretch reads QHPGLEKSGMFHENVGKGQHIEEKR. 3 disulfides stabilise this stretch: Cys-50–Cys-66, Cys-57–Cys-71, and Cys-65–Cys-79.

This sequence belongs to the neurotoxin 07 (Beta/delta-agtx) family. 03 (aga-4) subfamily. JZTX sub-subfamily. Expressed by the venom gland.

The protein localises to the secreted. Functionally, probable ion channel inhibitor. The polypeptide is U25-theraphotoxin-Cg1b (Chilobrachys guangxiensis (Chinese earth tiger tarantula)).